The sequence spans 193 residues: Oligoribonuclease (193 aa).

The Exonuclease domain maps to 20-183 (FVWLDCEMTG…ADVHESIEEL (164 aa)). Tyrosine 141 is an active-site residue.

The protein belongs to the oligoribonuclease family.

It localises to the cytoplasm. In terms of biological role, 3'-to-5' exoribonuclease specific for small oligoribonucleotides. In Paracidovorax citrulli (strain AAC00-1) (Acidovorax citrulli), this protein is Oligoribonuclease.